The following is a 159-amino-acid chain: uncharacterized protein (159 aa).

This is an uncharacterized protein from Homo sapiens (Human).